Here is a 455-residue protein sequence, read N- to C-terminus: Gamma-aminobutyric acid receptor subunit alpha-1 (455 aa).

The first 27 residues, 1-27 (MKKSRGLSDYLWAWTLILSTLSGRSYG), serve as a signal peptide directing secretion. Residues 28 to 252 (QPSQDELKDN…FHLKRKIGYF (225 aa)) are Extracellular-facing. A glycan (N-linked (GlcNAc...) asparagine) is linked at Asn-37. Arg-93 provides a ligand contact to 4-aminobutanoate. N-linked (GlcNAc...) asparagine glycosylation occurs at Asn-137. A 4-aminobutanoate-binding site is contributed by Thr-156. An intrachain disulfide couples Cys-165 to Cys-179. A helical membrane pass occupies residues 253 to 273 (VIQTYLPCIMTVILSQVSFWL). The Cytoplasmic portion of the chain corresponds to 274–278 (NRESV). A helical membrane pass occupies residues 279–300 (PARTVFGVTTVLTMTTLSISAR). The Extracellular segment spans residues 301–310 (NSLPKVAYAT). A helical membrane pass occupies residues 311 to 332 (AMDWFIAVCYAFVFSALIEFAT). The Cytoplasmic segment spans residues 333-420 (VNYFTKRGYA…TFNSVSKIDR (88 aa)). Residues 421-440 (LSRIAFPLLFGIFNLVYWAT) form a helical membrane-spanning segment. Residues 441–455 (YLNREPQLKAPTPHQ) lie on the Extracellular side of the membrane.

The protein belongs to the ligand-gated ion channel (TC 1.A.9) family. Gamma-aminobutyric acid receptor (TC 1.A.9.5) subfamily. GABRA1 sub-subfamily. Heteropentamer, formed by a combination of alpha (GABRA1-6), beta (GABRB1-3), gamma (GABRG1-3), delta (GABRD), epsilon (GABRE), rho (GABRR1-3), pi (GABRP) and theta (GABRQ) subunits, each subunit exhibiting distinct physiological and pharmacological properties. Interacts with UBQLN1. Interacts with TRAK1. Interacts with KIF21B. Identified in a complex of 720 kDa composed of LHFPL4, NLGN2, GABRA1, GABRB2, GABRG2 and GABRB3. Interacts with LHFPL4. Interacts with NLGN2. Interacts with SHISA7; interaction leads to the regulation of GABA(A) receptor trafficking, channel deactivation kinetics and pharmacology. Post-translationally, glycosylated. As to expression, expressed in the cerebellum.

Its subcellular location is the postsynaptic cell membrane. The protein localises to the cell membrane. The protein resides in the cytoplasmic vesicle membrane. It carries out the reaction chloride(in) = chloride(out). Its activity is regulated as follows. Allosterically activated by benzodiazepines, the neuroanesthetic alphaxalone and pentobarbital. Inhibited by the antagonist bicuculline. Potentiated by histamine. Alpha subunit of the heteropentameric ligand-gated chloride channel gated by Gamma-aminobutyric acid (GABA), a major inhibitory neurotransmitter in the brain. GABA-gated chloride channels, also named GABA(A) receptors (GABAAR), consist of five subunits arranged around a central pore and contain GABA active binding site(s) located at the alpha and beta subunit interface(s). When activated by GABA, GABAARs selectively allow the flow of chloride anions across the cell membrane down their electrochemical gradient. Alpha-1/GABRA1-containing GABAARs are largely synaptic. Chloride influx into the postsynaptic neuron following GABAAR opening decreases the neuron ability to generate a new action potential, thereby reducing nerve transmission. GABAARs containing alpha-1 and beta-2 or -3 subunits exhibit synaptogenic activity; the gamma-2 subunit being necessary but not sufficient to induce rapid synaptic contacts formation. GABAARs function also as histamine receptor where histamine binds at the interface of two neighboring beta subunits and potentiates GABA response. GABAARs containing alpha, beta and epsilon subunits also permit spontaneous chloride channel activity while preserving the structural information required for GABA-gated openings. Alpha-1-mediated plasticity in the orbitofrontal cortex regulates context-dependent action selection. Together with rho subunits, may also control neuronal and glial GABAergic transmission in the cerebellum. The polypeptide is Gamma-aminobutyric acid receptor subunit alpha-1 (Mus musculus (Mouse)).